A 365-amino-acid chain; its full sequence is Histidinol-phosphate aminotransferase (365 aa).

At Lys-221 the chain carries N6-(pyridoxal phosphate)lysine.

Belongs to the class-II pyridoxal-phosphate-dependent aminotransferase family. Histidinol-phosphate aminotransferase subfamily. As to quaternary structure, homodimer. Requires pyridoxal 5'-phosphate as cofactor.

It catalyses the reaction L-histidinol phosphate + 2-oxoglutarate = 3-(imidazol-4-yl)-2-oxopropyl phosphate + L-glutamate. The protein operates within amino-acid biosynthesis; L-histidine biosynthesis; L-histidine from 5-phospho-alpha-D-ribose 1-diphosphate: step 7/9. This is Histidinol-phosphate aminotransferase from Rhodopseudomonas palustris (strain HaA2).